The following is a 209-amino-acid chain: Uracil phosphoribosyltransferase (209 aa).

Residues arginine 79, arginine 104, and 131–139 (DPMLATGGS) each bind 5-phospho-alpha-D-ribose 1-diphosphate. Uracil contacts are provided by residues valine 194 and 199–201 (GDA). Aspartate 200 is a binding site for 5-phospho-alpha-D-ribose 1-diphosphate.

The protein belongs to the UPRTase family. Requires Mg(2+) as cofactor.

It catalyses the reaction UMP + diphosphate = 5-phospho-alpha-D-ribose 1-diphosphate + uracil. The protein operates within pyrimidine metabolism; UMP biosynthesis via salvage pathway; UMP from uracil: step 1/1. Allosterically activated by GTP. Its function is as follows. Catalyzes the conversion of uracil and 5-phospho-alpha-D-ribose 1-diphosphate (PRPP) to UMP and diphosphate. The protein is Uracil phosphoribosyltransferase of Bacillus mycoides (strain KBAB4) (Bacillus weihenstephanensis).